We begin with the raw amino-acid sequence, 122 residues long: Large ribosomal subunit protein bL12 (122 aa).

It belongs to the bacterial ribosomal protein bL12 family. In terms of assembly, homodimer. Part of the ribosomal stalk of the 50S ribosomal subunit. Forms a multimeric L10(L12)X complex, where L10 forms an elongated spine to which 2 to 4 L12 dimers bind in a sequential fashion. Binds GTP-bound translation factors.

In terms of biological role, forms part of the ribosomal stalk which helps the ribosome interact with GTP-bound translation factors. Is thus essential for accurate translation. This Shewanella woodyi (strain ATCC 51908 / MS32) protein is Large ribosomal subunit protein bL12.